The sequence spans 426 residues: Cytochrome c biogenesis protein Ccs1 (426 aa).

A run of 3 helical transmembrane segments spans residues 11–31, 70–90, and 153–173; these read LKFA…GSII, NFWF…CTFF, and IAPV…IFAS.

Belongs to the Ccs1/CcsB family. In terms of assembly, may interact with CcsA.

It is found in the plastid. The protein localises to the chloroplast thylakoid membrane. In terms of biological role, required during biogenesis of c-type cytochromes (cytochrome c6 and cytochrome f) at the step of heme attachment. This chain is Cytochrome c biogenesis protein Ccs1, found in Heterosigma akashiwo (strain CCMP452 / OLISTH).